Reading from the N-terminus, the 1025-residue chain is Multidrug resistance protein MdtC (1025 aa).

Transmembrane regions (helical) follow at residues 3 to 23, 333 to 353, 360 to 380, 387 to 407, 431 to 451, 463 to 483, 528 to 548, 853 to 873, 875 to 895, 897 to 917, 953 to 973, and 984 to 1004; these read FFAL…AITL, EVEQ…FLFL, IIPA…MYLC, LSLM…IVVL, VGFT…PLLL, FAVT…TLTP, LVGV…ISIP, VILI…LYES, VHPL…LLAL, LFNA…IGIV, PIMM…LSGG, and ITIV…TPVV.

This sequence belongs to the resistance-nodulation-cell division (RND) (TC 2.A.6) family. MdtC subfamily. Part of a tripartite efflux system composed of MdtA, MdtB and MdtC. MdtC forms a heteromultimer with MdtB.

The protein localises to the cell inner membrane. The MdtABC tripartite complex confers resistance against novobiocin and deoxycholate. The polypeptide is Multidrug resistance protein MdtC (Escherichia coli (strain SMS-3-5 / SECEC)).